The chain runs to 301 residues: Ribosomal protein L11 methyltransferase (301 aa).

Positions 147, 168, 190, and 237 each coordinate S-adenosyl-L-methionine.

Belongs to the methyltransferase superfamily. PrmA family.

Its subcellular location is the cytoplasm. The catalysed reaction is L-lysyl-[protein] + 3 S-adenosyl-L-methionine = N(6),N(6),N(6)-trimethyl-L-lysyl-[protein] + 3 S-adenosyl-L-homocysteine + 3 H(+). Methylates ribosomal protein L11. The protein is Ribosomal protein L11 methyltransferase of Synechococcus sp. (strain RCC307).